The chain runs to 219 residues: Ras-related protein Rab-3B (219 aa).

An N-acetylalanine modification is found at alanine 2. Residues serine 31, serine 32, valine 33, glycine 34, lysine 35, threonine 36, serine 37, proline 49, and serine 53 each contribute to the GTP site. Residue threonine 36 coordinates Mg(2+). The Switch 1 signature appears at 45–58 (DTFTPAFVSTVGID). Positions 54 and 77 each coordinate Mg(2+). The Switch 2 signature appears at 78-96 (TAGQERYRTITTAYYRGAM). Residue glycine 80 coordinates GTP. The residue at position 86 (threonine 86) is a Phosphothreonine; by LRRK2. GTP contacts are provided by asparagine 135, lysine 136, aspartate 138, alanine 166, and lysine 167. Phosphoserine is present on residues serine 188 and serine 190. 2 S-geranylgeranyl cysteine lipidation sites follow: cysteine 217 and cysteine 219. Position 219 is a cysteine methyl ester (cysteine 219).

This sequence belongs to the small GTPase superfamily. Rab family. Interacts with RIMS1, RIMS2, RPH3A and RPH3AL. The GTP-bound form interacts with GAS8/DRC4 (via coiled-coil domains). Interacts with GDI2, CHM and CHML; phosphorylation at Thr-86 disrupts these interactions. Interacts with MADD (via uDENN domain); the GTP-bound form is preferred for interaction. Mg(2+) is required as a cofactor. Phosphorylation of Thr-86 in the switch II region by LRRK2 prevents the association of RAB regulatory proteins, including CHM, CHML and RAB GDP dissociation inhibitor GDI2. Abundantly expressed in testis, lung and brain.

It localises to the cell membrane. The protein resides in the golgi apparatus. It carries out the reaction GTP + H2O = GDP + phosphate + H(+). Its activity is regulated as follows. Regulated by guanine nucleotide exchange factors (GEFs) which promote the exchange of bound GDP for free GTP. Regulated by GTPase activating proteins (GAPs) which increase the GTP hydrolysis activity. Inhibited by GDP dissociation inhibitors (GDIs) which prevent Rab-GDP dissociation. In terms of biological role, the small GTPases Rab are key regulators of intracellular membrane trafficking, from the formation of transport vesicles to their fusion with membranes. Rabs cycle between an inactive GDP-bound form and an active GTP-bound form that is able to recruit to membranes different sets of downstream effectors directly responsible for vesicle formation, movement, tethering and fusion. The polypeptide is Ras-related protein Rab-3B (Mus musculus (Mouse)).